Consider the following 174-residue polypeptide: Cytochrome c-type biogenesis protein CcmE (174 aa).

At 1 to 8 (MNPRRKSR) the chain is on the cytoplasmic side. Residues 9-29 (LSVVLFIFLGISVASALVLYA) form a helical; Signal-anchor for type II membrane protein membrane-spanning segment. Residues 30-174 (LRQNIDLFYT…QEKQFKEGNQ (145 aa)) lie on the Periplasmic side of the membrane. Histidine 131 and tyrosine 135 together coordinate heme. Residues 149–174 (KPMGISDLKNESDRDRQEKQFKEGNQ) form a disordered region. Residues 156-174 (LKNESDRDRQEKQFKEGNQ) show a composition bias toward basic and acidic residues.

Belongs to the CcmE/CycJ family.

It is found in the cell inner membrane. In terms of biological role, heme chaperone required for the biogenesis of c-type cytochromes. Transiently binds heme delivered by CcmC and transfers the heme to apo-cytochromes in a process facilitated by CcmF and CcmH. This Histophilus somni (strain 129Pt) (Haemophilus somnus) protein is Cytochrome c-type biogenesis protein CcmE.